Consider the following 388-residue polypeptide: Reducing end xylose-releasing exo-oligoxylanase (388 aa).

The active-site Proton donor is the E70. The Proton acceptor role is filled by D263.

Belongs to the glycosyl hydrolase 8 (cellulase D) family.

The catalysed reaction is Hydrolysis of (1-&gt;4)-beta-D-xylose residues from the reducing end of oligosaccharides.. Its function is as follows. Hydrolyzes xylooligosaccharides with a degree of polymerization of greater than or equal to 3, releasing xylose from the reducing end. Only hydrolyzes the beta anomers of xylooligosaccharides, with inversion of anomeric configuration. Hydrolyzes the glucose and xylose-based trisaccharides where xylose is located at the -1 subsite, GXX, XXG and GXG. Does not hydrolyze xylan, chitosan, lichenan, curdlan or carboxymethylcellulose. This chain is Reducing end xylose-releasing exo-oligoxylanase, found in Halalkalibacterium halodurans (strain ATCC BAA-125 / DSM 18197 / FERM 7344 / JCM 9153 / C-125) (Bacillus halodurans).